Here is a 376-residue protein sequence, read N- to C-terminus: Growth/differentiation factor 8 (376 aa).

The N-terminal stretch at 1-24 (MMQKLQMYVYIYLFMLIAAGPVDL) is a signal peptide. A propeptide spanning residues 25–267 (NEGSEREENV…VTDTPKRSRR (243 aa)) is cleaved from the precursor. A glycan (N-linked (GlcNAc...) asparagine) is linked at N72. Intrachain disulfides connect C273–C283, C282–C341, C310–C373, and C314–C375.

The protein belongs to the TGF-beta family. Homodimer; disulfide-linked. Interacts with WFIKKN2, leading to inhibit its activity. Interacts with FSTL3. Synthesized as large precursor molecule that undergoes proteolytic cleavage to generate an N-terminal propeptide and a disulfide linked C-terminal dimer, which is the biologically active molecule. The circulating form consists of a latent complex of the C-terminal dimer and other proteins, including its propeptide, which maintain the C-terminal dimer in a latent, inactive state. Ligand activation requires additional cleavage of the prodomain by a tolloid-like metalloproteinase. In terms of tissue distribution, expressed specifically in developing and adult skeletal muscle. Weak expression in adipose tissue.

It localises to the secreted. Acts specifically as a negative regulator of skeletal muscle growth. In Mus musculus (Mouse), this protein is Growth/differentiation factor 8 (Mstn).